The following is a 194-amino-acid chain: ATP synthase subunit 5, mitochondrial (194 aa).

As to quaternary structure, F-type ATP synthases have 2 components, the catalytic core F(1) and the membrane-embedded component F(0), linked together by a central stalk and a peripheral stalk. The central stalk, also called rotor shaft, is often seen as part of F(1). The peripheral stalk is seen as part of F(0). F(0) contains the membrane channel next to the rotor. F-type ATP synthases form dimers but each monomer functions independently in ATP generation. The dimer consists of 18 different polypeptides: ATP1 (subunit alpha, part of F(1), 3 molecules per monomer), ATP2 (subunit beta, part of F(1), 3 molecules per monomer), ATP3 (subunit gamma, part of the central stalk), ATP4 (subunit b, part of the peripheral stalk), ATP5/OSCP (subunit 5/OSCP, part of the peripheral stalk), ATP6 (subunit a, part of the peripheral stalk), ATP7 (subunit d, part of the peripheral stalk), ATP8 (subunit 8, part of the peripheral stalk), OLI1 (subunit c, part of the rotor, 10 molecules per monomer), ATP14 (subunit h, part of the peripheral stalk), ATP15 (subunit epsilon, part of the central stalk), ATP16 (subunit delta, part of the central stalk), ATP17 (subunit f, part of the peripheral stalk), ATP18 (subunit i/j, part of the peripheral stalk). Dimer-specific subunits are ATP19 (subunit k, at interface between monomers), ATP20 (subunit g, at interface between monomers), TIM11 (subunit e, at interface between monomers). Also contains subunit L.

Its subcellular location is the mitochondrion inner membrane. Functionally, mitochondrial membrane ATP synthase (F(1)F(0) ATP synthase or Complex V) produces ATP from ADP in the presence of a proton gradient across the membrane which is generated by electron transport complexes of the respiratory chain. F-type ATP synthases consist of two structural domains, F(1) - containing the extramembraneous catalytic core, and F(0) - containing the membrane proton channel, linked together by a central stalk and a peripheral stalk. During catalysis, ATP synthesis in the catalytic domain of F(1) is coupled via a rotary mechanism of the central stalk subunits to proton translocation. Part of the complex F(0) domain and the peripheral stalk, which acts as a stator to hold the catalytic alpha/ATP1(3)beta/ATP2(3) subcomplex and subunit a/ATP6 static relative to the rotary elements. The protein is ATP synthase subunit 5, mitochondrial of Pichia angusta (Yeast).